The following is a 435-amino-acid chain: tRNA modification GTPase MnmE (435 aa).

Arginine 20, glutamate 77, and lysine 117 together coordinate (6S)-5-formyl-5,6,7,8-tetrahydrofolate. The TrmE-type G domain maps to 214–359 (GIKVVIVGVP…FLKEIESFCL (146 aa)). GTP is bound by residues 224-229 (NSGKSS), 243-249 (TEEEGTT), and 268-271 (DTAG). Serine 228 and threonine 249 together coordinate Mg(2+). (6S)-5-formyl-5,6,7,8-tetrahydrofolate is bound at residue lysine 435.

This sequence belongs to the TRAFAC class TrmE-Era-EngA-EngB-Septin-like GTPase superfamily. TrmE GTPase family. In terms of assembly, homodimer. Heterotetramer of two MnmE and two MnmG subunits. K(+) is required as a cofactor.

The protein localises to the cytoplasm. Functionally, exhibits a very high intrinsic GTPase hydrolysis rate. Involved in the addition of a carboxymethylaminomethyl (cmnm) group at the wobble position (U34) of certain tRNAs, forming tRNA-cmnm(5)s(2)U34. In Bartonella bacilliformis (strain ATCC 35685 / KC583 / Herrer 020/F12,63), this protein is tRNA modification GTPase MnmE.